A 370-amino-acid chain; its full sequence is Serine/threonine-protein kinase RIM11/MSD1 (370 aa).

A Protein kinase domain is found at 39–322; the sequence is FPTTEVVGHG…ALQCLCSPYF (284 aa). ATP contacts are provided by residues 45-53 and lysine 68; that span reads VGHGSFGVV. Aspartate 164 acts as the Proton acceptor in catalysis. Phosphotyrosine is present on tyrosine 199.

It belongs to the protein kinase superfamily. CMGC Ser/Thr protein kinase family. GSK-3 subfamily. In terms of assembly, interacts with TDA1.

It catalyses the reaction L-seryl-[protein] + ATP = O-phospho-L-seryl-[protein] + ADP + H(+). It carries out the reaction L-threonyl-[protein] + ATP = O-phospho-L-threonyl-[protein] + ADP + H(+). Functionally, serine/threonine protein kinase that is thought to function in regulating kinetochore activity and entry into meiosis. Could phosphorylate IME1. This is Serine/threonine-protein kinase RIM11/MSD1 (RIM11) from Saccharomyces cerevisiae (strain ATCC 204508 / S288c) (Baker's yeast).